Consider the following 542-residue polypeptide: MILALLLLCSTITQFSDGYVIGGGTQPGGNQNNPNSPTYNGGIGGGVYPGGGGNNGGVQRDEGGYCNSNTDCRSGLYCTASVNGVKICLSTSNGGGGNGFPSGNGGCQTSSNCQYGSVCVVTNGQGNCQIQTGGYVSPARQGMVRYPSSNSITVDFNEDVFSKNAPEPGKINSGCERDADCDDELSCTMYFGEMMCRSPIKPLIPLRCESDAECPSTEYLCVFSTAMQDRVCYKYGDVVTDGYVIPIKHKISMELKKSTTTSSPPITTTHLSKPEESNGLFAESEAIFEQPGSLLTSALQKRADKMSQNGPTPPMYVKMSDIPSEHVIAGQHDGEAVRITKVVVKEEKEMEENGETREKVIPKIGEGVGMVDDEPIDPMATVCQFDYHCRMGESCSGRVRFVDRNVTVCRYDMFKKHRQCLYHSDCISGQRCTPTGRDIATCETDISATIGSIQCFYDYECSGGEKCTLVDEKERKFVCRPSPTSDPRMNQICTTNSQCPFQQVCRQSGGVSLCVDVSIARNPALLHERLWRFLRNFILRTL.

A disordered region spans residues 256–275; it reads KKSTTTSSPPITTTHLSKPE. Residues 258–269 show a composition bias toward low complexity; it reads STTTSSPPITTT.

This is an uncharacterized protein from Caenorhabditis elegans.